The sequence spans 95 residues: Aspartyl/glutamyl-tRNA(Asn/Gln) amidotransferase subunit C (95 aa).

This sequence belongs to the GatC family. In terms of assembly, heterotrimer of A, B and C subunits.

The enzyme catalyses L-glutamyl-tRNA(Gln) + L-glutamine + ATP + H2O = L-glutaminyl-tRNA(Gln) + L-glutamate + ADP + phosphate + H(+). The catalysed reaction is L-aspartyl-tRNA(Asn) + L-glutamine + ATP + H2O = L-asparaginyl-tRNA(Asn) + L-glutamate + ADP + phosphate + 2 H(+). In terms of biological role, allows the formation of correctly charged Asn-tRNA(Asn) or Gln-tRNA(Gln) through the transamidation of misacylated Asp-tRNA(Asn) or Glu-tRNA(Gln) in organisms which lack either or both of asparaginyl-tRNA or glutaminyl-tRNA synthetases. The reaction takes place in the presence of glutamine and ATP through an activated phospho-Asp-tRNA(Asn) or phospho-Glu-tRNA(Gln). The chain is Aspartyl/glutamyl-tRNA(Asn/Gln) amidotransferase subunit C from Desulforapulum autotrophicum (strain ATCC 43914 / DSM 3382 / VKM B-1955 / HRM2) (Desulfobacterium autotrophicum).